The chain runs to 186 residues: ATP synthase subunit delta (186 aa).

The protein belongs to the ATPase delta chain family. F-type ATPases have 2 components, F(1) - the catalytic core - and F(0) - the membrane proton channel. F(1) has five subunits: alpha(3), beta(3), gamma(1), delta(1), epsilon(1). F(0) has three main subunits: a(1), b(2) and c(10-14). The alpha and beta chains form an alternating ring which encloses part of the gamma chain. F(1) is attached to F(0) by a central stalk formed by the gamma and epsilon chains, while a peripheral stalk is formed by the delta and b chains.

It is found in the cellular chromatophore membrane. In terms of biological role, f(1)F(0) ATP synthase produces ATP from ADP in the presence of a proton or sodium gradient. F-type ATPases consist of two structural domains, F(1) containing the extramembraneous catalytic core and F(0) containing the membrane proton channel, linked together by a central stalk and a peripheral stalk. During catalysis, ATP synthesis in the catalytic domain of F(1) is coupled via a rotary mechanism of the central stalk subunits to proton translocation. Functionally, this protein is part of the stalk that links CF(0) to CF(1). It either transmits conformational changes from CF(0) to CF(1) or is implicated in proton conduction. The sequence is that of ATP synthase subunit delta from Rhodobacter capsulatus (Rhodopseudomonas capsulata).